Consider the following 152-residue polypeptide: Chemokine-like factor (152 aa).

The 121-residue stretch at 13–133 (FCCTLKCFVK…DCALMCQKLR (121 aa)) folds into the MARVEL domain. 4 helical membrane-spanning segments follow: residues 19–39 (CFVKFLRLVVTVTSMIFFIVG), 46–66 (IVITGFEVTVIFCFLVLYTCG), 81–101 (VINSMVTALCMLIVSVLALIP), and 108–128 (ILGGVFGFLTVTCTIADCALM).

It belongs to the chemokine-like factor family. In terms of tissue distribution, ubiquitous.

The protein localises to the membrane. In terms of biological role, may play an important role in inflammation and regeneration of skeletal muscle. Essential for embryonic development. This chain is Chemokine-like factor (Cklf), found in Mus musculus (Mouse).